The sequence spans 97 residues: Large ribosomal subunit protein eL21 (97 aa).

Residues Met1 to Pro26 are disordered. Basic residues predominate over residues Ser9–Gln21.

It belongs to the eukaryotic ribosomal protein eL21 family.

The sequence is that of Large ribosomal subunit protein eL21 from Methanococcus maripaludis (strain C6 / ATCC BAA-1332).